A 300-amino-acid polypeptide reads, in one-letter code: Transcription termination/antitermination protein NusG (300 aa).

Residues 1–99 form a disordered region; the sequence is MSDPNVNDAI…EAEEPELDPI (99 aa). 2 stretches are compositionally biased toward acidic residues: residues 14-41 and 47-97; these read ESVE…EAAD and ETDE…PELD.

It belongs to the NusG family.

Participates in transcription elongation, termination and antitermination. The protein is Transcription termination/antitermination protein NusG of Streptomyces coelicolor (strain ATCC BAA-471 / A3(2) / M145).